A 65-amino-acid chain; its full sequence is Myotoxin-1 (65 aa).

The signal sequence occupies residues 1–22 (MKILYLLFAFLFLAFLSEPGNA). Disulfide bonds link Cys26/Cys58, Cys33/Cys52, and Cys40/Cys59.

This sequence belongs to the crotamine-myotoxin family. Monomer. As to expression, expressed by the venom gland.

The protein localises to the secreted. Functionally, cationic peptide that possesses multiple functions. It acts as a cell-penetrating peptide (CPP), and as a potent voltage-gated potassium channel (Kv) inhibitor. It exhibits antimicrobial activities, hind limb paralysis, and severe muscle necrosis by a non-enzymatic mechanism. The polypeptide is Myotoxin-1 (Crotalus durissus terrificus (South American rattlesnake)).